The sequence spans 497 residues: NAD(P)H-quinone oxidoreductase subunit 2, chloroplastic (497 aa).

14 helical membrane passes run 13–33 (VILP…LDLI), 37–57 (SAWL…ALVF), 76–96 (FTIS…LIST), 103–123 (GMGL…GLFL), 129–149 (LVTV…LVGY), 164–184 (LLMG…LYGL), 206–226 (IAVW…LSAF), 240–260 (PTPV…ALAT), 274–294 (WHVL…LIAA), 311–331 (AGYL…GMIT), 332–352 (YMVT…LFGL), 373–393 (AFCL…AGFF), 406–426 (GLYL…YYYL), and 462–482 (VGIA…NPII).

It belongs to the complex I subunit 2 family. As to quaternary structure, NDH is composed of at least 16 different subunits, 5 of which are encoded in the nucleus.

It localises to the plastid. It is found in the chloroplast thylakoid membrane. It catalyses the reaction a plastoquinone + NADH + (n+1) H(+)(in) = a plastoquinol + NAD(+) + n H(+)(out). The catalysed reaction is a plastoquinone + NADPH + (n+1) H(+)(in) = a plastoquinol + NADP(+) + n H(+)(out). Its function is as follows. NDH shuttles electrons from NAD(P)H:plastoquinone, via FMN and iron-sulfur (Fe-S) centers, to quinones in the photosynthetic chain and possibly in a chloroplast respiratory chain. The immediate electron acceptor for the enzyme in this species is believed to be plastoquinone. Couples the redox reaction to proton translocation, and thus conserves the redox energy in a proton gradient. The sequence is that of NAD(P)H-quinone oxidoreductase subunit 2, chloroplastic from Zygnema circumcarinatum (Green alga).